The sequence spans 186 residues: Protein Syd (186 aa).

It belongs to the Syd family.

The protein resides in the cell inner membrane. In terms of biological role, interacts with the SecY protein in vivo. May bind preferentially to an uncomplexed state of SecY, thus functioning either as a chelating agent for excess SecY in the cell or as a regulatory factor that negatively controls the translocase function. This Pseudoalteromonas atlantica (strain T6c / ATCC BAA-1087) protein is Protein Syd.